A 920-amino-acid chain; its full sequence is Plasma membrane ATPase (920 aa).

Positions 1–77 (MADHSASGAP…TPGGGRVVPE (77 aa)) are disordered. At 1 to 115 (MADHSASGAP…KEEKENHFLK (115 aa)) the chain is on the cytoplasmic side. Acidic residues predominate over residues 38 to 51 (EDDEDEDIDALIED). Residues 116–138 (FLGFFVGPIQFVMEGAAVLAAGL) traverse the membrane as a helical segment. Residues 139–140 (ED) lie on the Extracellular side of the membrane. Residues 141–160 (WVDFGVICGLLLLNAVVGFV) traverse the membrane as a helical segment. Residues 161-291 (QEFQAGSIVD…GSGHFTEVLN (131 aa)) lie on the Cytoplasmic side of the membrane. The chain crosses the membrane as a helical span at residues 292 to 314 (GIGTILLILVIFTLLIVWVSSFY). Residues 315 to 321 (RSNPIVQ) lie on the Extracellular side of the membrane. Residues 322 to 354 (ILEFTLAITIIGVPVGLPAVVTTTMAVGAAYLA) form a helical membrane-spanning segment. Residues 355 to 687 (KKKAIVQKLS…LKTSRQIFHR (333 aa)) lie on the Cytoplasmic side of the membrane. The active-site 4-aspartylphosphate intermediate is the Asp-378. The Mg(2+) site is built by Asp-634 and Asp-638. Residues 688–713 (MYAYVVYRIALSIHLEIFLGLWIAIL) traverse the membrane as a helical segment. The Extracellular portion of the chain corresponds to 714–720 (NRSLNIE). A helical transmembrane segment spans residues 721–738 (LVVFIAIFADVATLAIAY). The Cytoplasmic segment spans residues 739 to 754 (DNAPYSQTPVKWNLPK). The chain crosses the membrane as a helical span at residues 755-779 (LWGMSVLLGVVLAVGTWITVTTMYA). At 780 to 806 (QGENGGIVQNFGNMDEVLFLQISLTEN) the chain is on the extracellular side. Helical transmembrane passes span 807-826 (WLIF…PSWQ) and 827-847 (LSGA…WGWF). Topologically, residues 848-853 (EHSDTS) are extracellular. The helical transmembrane segment at 854-878 (IVAVVRIWIFSFGIFCIMGGVYYIL) threads the bilayer. The Cytoplasmic segment spans residues 879-920 (QDSVGFDNLMHGKSPKGNQKQRSLEDFVVSLQRVSTQHEKSQ).

The protein belongs to the cation transport ATPase (P-type) (TC 3.A.3) family. Type IIIA subfamily.

The protein resides in the cell membrane. The enzyme catalyses ATP + H2O + H(+)(in) = ADP + phosphate + 2 H(+)(out). Functionally, the plasma membrane ATPase of plants and fungi is a hydrogen ion pump. The proton gradient it generates drives the active transport of nutrients by H(+)-symport. The resulting external acidification and/or internal alkinization may mediate growth responses. In Neurospora crassa (strain ATCC 24698 / 74-OR23-1A / CBS 708.71 / DSM 1257 / FGSC 987), this protein is Plasma membrane ATPase (pma-1).